Here is an 87-residue protein sequence, read N- to C-terminus: Retinal rod rhodopsin-sensitive cGMP 3',5'-cyclic phosphodiesterase subunit gamma (87 aa).

N-acetylmethionine is present on Met-1. Over residues 1-12 the composition is skewed to basic and acidic residues; it reads MNLEPPKGEIRS. The disordered stretch occupies residues 1–55; the sequence is MNLEPPKGEIRSATRVIGGPVTPRKGPPKFKQRQTRQFKSKPPKKGVQGFGDDIP. Residues 26-44 show a composition bias toward basic residues; sequence GPPKFKQRQTRQFKSKPPK.

This sequence belongs to the rod/cone cGMP-PDE gamma subunit family. As to quaternary structure, oligomer composed of two catalytic chains (alpha and beta), an inhibitory chain (gamma) and the delta chain.

The enzyme catalyses 3',5'-cyclic GMP + H2O = GMP + H(+). In terms of biological role, participates in processes of transmission and amplification of the visual signal. cGMP-PDEs are the effector molecules in G-protein-mediated phototransduction in vertebrate rods and cones. The chain is Retinal rod rhodopsin-sensitive cGMP 3',5'-cyclic phosphodiesterase subunit gamma (Pde6g) from Mus musculus (Mouse).